A 463-amino-acid chain; its full sequence is ATP synthase subunit beta 1 (463 aa).

Position 152–159 (152–159 (GGAGVGKT)) interacts with ATP.

The protein belongs to the ATPase alpha/beta chains family. F-type ATPases have 2 components, CF(1) - the catalytic core - and CF(0) - the membrane proton channel. CF(1) has five subunits: alpha(3), beta(3), gamma(1), delta(1), epsilon(1). CF(0) has three main subunits: a(1), b(2) and c(9-12). The alpha and beta chains form an alternating ring which encloses part of the gamma chain. CF(1) is attached to CF(0) by a central stalk formed by the gamma and epsilon chains, while a peripheral stalk is formed by the delta and b chains.

Its subcellular location is the cell inner membrane. It catalyses the reaction ATP + H2O + 4 H(+)(in) = ADP + phosphate + 5 H(+)(out). Produces ATP from ADP in the presence of a proton gradient across the membrane. The catalytic sites are hosted primarily by the beta subunits. The polypeptide is ATP synthase subunit beta 1 (Shewanella frigidimarina (strain NCIMB 400)).